We begin with the raw amino-acid sequence, 843 residues long: Protein P (843 aa).

The terminal protein domain (TP) stretch occupies residues 1-177; the sequence is MPLSYQHFRK…FCGSPYSWEQ (177 aa). A spacer region spans residues 178-346; that stretch reads ELQHGRLVFQ…YCLTHIVNLL (169 aa). 2 disordered regions span residues 224–273 and 288–316; these read GLQP…SSTS and HLST…RSQS. Residues 288-299 show a composition bias toward polar residues; it reads HLSTSKRQSSSG. A polymerase/reverse transcriptase domain (RT) region spans residues 347-690; that stretch reads EDWGPCTEHG…YLNLYPVARQ (344 aa). Residues 357–600 enclose the Reverse transcriptase domain; the sequence is EHNIRIPRTP…YSLNFMGYVI (244 aa). Residues aspartate 429, aspartate 551, and aspartate 552 each contribute to the Mg(2+) site.

Belongs to the hepadnaviridae P protein family.

It catalyses the reaction DNA(n) + a 2'-deoxyribonucleoside 5'-triphosphate = DNA(n+1) + diphosphate. It carries out the reaction Endonucleolytic cleavage to 5'-phosphomonoester.. Activated by host HSP70 and HSP40 in vitro to be able to bind the epsilon loop of the pgRNA. Because deletion of the RNase H region renders the protein partly chaperone-independent, the chaperones may be needed indirectly to relieve occlusion of the RNA-binding site by this domain. Inhibited by several reverse-transcriptase inhibitors: Lamivudine, Adefovir and Entecavir. Its function is as follows. Multifunctional enzyme that converts the viral RNA genome into dsDNA in viral cytoplasmic capsids. This enzyme displays a DNA polymerase activity that can copy either DNA or RNA templates, and a ribonuclease H (RNase H) activity that cleaves the RNA strand of RNA-DNA heteroduplexes in a partially processive 3'- to 5'-endonucleasic mode. Neo-synthesized pregenomic RNA (pgRNA) are encapsidated together with the P protein, and reverse-transcribed inside the nucleocapsid. Initiation of reverse-transcription occurs first by binding the epsilon loop on the pgRNA genome, and is initiated by protein priming, thereby the 5'-end of (-)DNA is covalently linked to P protein. Partial (+)DNA is synthesized from the (-)DNA template and generates the relaxed circular DNA (RC-DNA) genome. After budding and infection, the RC-DNA migrates in the nucleus, and is converted into a plasmid-like covalently closed circular DNA (cccDNA). The activity of P protein does not seem to be necessary for cccDNA generation, and is presumably released from (+)DNA by host nuclear DNA repair machinery. The polypeptide is Protein P (Homo sapiens (Human)).